A 303-amino-acid polypeptide reads, in one-letter code: Acetylglutamate kinase (303 aa).

Residues 68–69, Arg-90, and Asn-194 contribute to the substrate site; that span reads GG.

This sequence belongs to the acetylglutamate kinase family. ArgB subfamily.

The protein resides in the cytoplasm. It catalyses the reaction N-acetyl-L-glutamate + ATP = N-acetyl-L-glutamyl 5-phosphate + ADP. It participates in amino-acid biosynthesis; L-arginine biosynthesis; N(2)-acetyl-L-ornithine from L-glutamate: step 2/4. In terms of biological role, catalyzes the ATP-dependent phosphorylation of N-acetyl-L-glutamate. The chain is Acetylglutamate kinase from Psychrobacter arcticus (strain DSM 17307 / VKM B-2377 / 273-4).